The following is a 186-amino-acid chain: Ribosome-recycling factor (186 aa).

This sequence belongs to the RRF family.

The protein localises to the cytoplasm. Responsible for the release of ribosomes from messenger RNA at the termination of protein biosynthesis. May increase the efficiency of translation by recycling ribosomes from one round of translation to another. This Pediococcus pentosaceus (strain ATCC 25745 / CCUG 21536 / LMG 10740 / 183-1w) protein is Ribosome-recycling factor.